Reading from the N-terminus, the 475-residue chain is Ankyrin repeat, SAM and basic leucine zipper domain-containing protein 1 (475 aa).

Residues 1-24 (MAAGPLRGLAVAGGGESSESEDDG) form a disordered region. Phosphoserine occurs at positions 17, 18, and 20. 6 ANK repeats span residues 45–74 (ERQE…SVDT), 78–107 (YGWT…NASF), 110–144 (DKQT…DPNV), 148–177 (RLMT…EVNT), 181–210 (NGYT…NKMI), and 214–243 (DGKT…PLEG). One can recognise an SAM domain in the interval 272 to 334 (SYTAFGDLEI…KIMAALKELE (63 aa)).

In terms of assembly, interacts with DDX4, PIWIL1, RANBP9 and TDRD1.

Its subcellular location is the cytoplasm. In terms of biological role, plays a central role during spermatogenesis by repressing transposable elements and preventing their mobilization, which is essential for the germline integrity. Acts via the piRNA metabolic process, which mediates the repression of transposable elements during meiosis by forming complexes composed of piRNAs and Piwi proteins and governs the methylation and subsequent repression of transposons. Its association with pi-bodies suggests a participation in the primary piRNAs metabolic process. Required prior to the pachytene stage to facilitate the production of multiple types of piRNAs, including those associated with repeats involved in the regulation of retrotransposons. May act by mediating protein-protein interactions during germ cell maturation. The sequence is that of Ankyrin repeat, SAM and basic leucine zipper domain-containing protein 1 (ASZ1) from Ovis aries (Sheep).